We begin with the raw amino-acid sequence, 120 residues long: Large ribosomal subunit protein uL18 (120 aa).

The protein belongs to the universal ribosomal protein uL18 family. Part of the 50S ribosomal subunit; part of the 5S rRNA/L5/L18/L25 subcomplex. Contacts the 5S and 23S rRNAs.

In terms of biological role, this is one of the proteins that bind and probably mediate the attachment of the 5S RNA into the large ribosomal subunit, where it forms part of the central protuberance. This chain is Large ribosomal subunit protein uL18, found in Rhodospirillum centenum (strain ATCC 51521 / SW).